A 210-amino-acid chain; its full sequence is MSTKVPIYLKRGSRKGKKEKLRDLLSSDMISPPLGDFRHTIHIGSGGGSDMFGDISFLQGKFHLLPGTMVEGPEEDGTFDLPFQFTRTATVCGRELPDGPSPLLKNAISLPVIGGPQALTLPTAQAPPKPPRLHLETPQPSPQEGGSVDIWRIPETGSPNSGLTPESGAEEPFLSNASSLLSLHVDLGPSILDDVLQIMDQDLDSMQIPT.

An N-acetylserine modification is found at serine 2. Positions 30-44 (ISPPLGDFRHTIHIG) constitute a CRIB domain. 3 positions are modified to phosphoserine: serine 31, serine 101, and serine 141. The disordered stretch occupies residues 122-171 (PTAQAPPKPPRLHLETPQPSPQEGGSVDIWRIPETGSPNSGLTPESGAEE).

It belongs to the BORG/CEP family. Interacts with RHOQ and CDC42 in a GTP-dependent manner, and with SEPT7. In terms of tissue distribution, highly expressed in the heart. Weakly expressed in the pancreas and liver.

It is found in the endomembrane system. The protein resides in the cytoplasm. Its subcellular location is the cytoskeleton. In terms of biological role, probably involved in the organization of the actin cytoskeleton. May act downstream of CDC42 to induce actin filament assembly leading to cell shape changes. Induces pseudopodia formation in fibroblasts in a CDC42-dependent manner. This is Cdc42 effector protein 2 (CDC42EP2) from Homo sapiens (Human).